The following is a 213-amino-acid chain: Kynurenine formamidase (213 aa).

Trp18 serves as a coordination point for substrate. Zn(2+)-binding residues include His48, His52, and Asp54. The Proton donor/acceptor role is filled by His58. Zn(2+) contacts are provided by His160 and Glu172.

Belongs to the Cyclase 1 superfamily. KynB family. Homodimer. The cofactor is Zn(2+).

The catalysed reaction is N-formyl-L-kynurenine + H2O = L-kynurenine + formate + H(+). Its pathway is amino-acid degradation; L-tryptophan degradation via kynurenine pathway; L-kynurenine from L-tryptophan: step 2/2. Its function is as follows. Catalyzes the hydrolysis of N-formyl-L-kynurenine to L-kynurenine, the second step in the kynurenine pathway of tryptophan degradation. The polypeptide is Kynurenine formamidase (Burkholderia ambifaria (strain ATCC BAA-244 / DSM 16087 / CCUG 44356 / LMG 19182 / AMMD) (Burkholderia cepacia (strain AMMD))).